A 479-amino-acid chain; its full sequence is MNTILAQQIANEGGVEAWMMAQQHKSLLRFLTCGSVDDGKSTLIGRLLHDTLQIYEDQLSSLHNDSKRHGTQGEKLDLALLVDGLQAEREQGITIDVAYRYFSTEKRKFIIADTPGHEQYTRNMATGASTCDLAILLIDARKGVLDQTRRHSFISTLLGIKHLVVAINKMDLVDYREETFARIREDYLTFAEQLPGDLDIRFVPLSALEGDNVAAQSANMRWYSGPTLLEVLETVDIQRAVDRQPMRFPVQYVNRPNLDFRGYAGTLASGSVKVGERIKVLPSGVESSVARIVTFDGDKEEACAGEAITLVLNDDIDISRGDLLLAANETLAPARHAAIDVVWMAEQPLAPGQSYDVKLAGKKTRARIEAIRYQIDINNLTQRDVESLPLNGIGLVEMTFDEPLALDIYQQNPVTGGLIFIDRLSNVTVGAGMVRELDERGATPPVEYSAFELELNALVRRHFPHWDARDLLGDKHGAA.

Positions Lys-25–Arg-239 constitute a tr-type G domain. The tract at residues Gly-34–Ser-41 is G1. GTP is bound at residue Gly-34–Ser-41. Residues Gly-92 to Asp-96 are G2. Positions Asp-113–Gly-116 are G3. GTP is bound by residues Asp-113 to His-117 and Asn-168 to Asp-171. Residues Asn-168–Asp-171 are G4. The segment at Ser-206–Leu-208 is G5.

It belongs to the TRAFAC class translation factor GTPase superfamily. Classic translation factor GTPase family. CysN/NodQ subfamily. Heterodimer composed of CysD, the smaller subunit, and CysN.

The enzyme catalyses sulfate + ATP + H(+) = adenosine 5'-phosphosulfate + diphosphate. It participates in sulfur metabolism; hydrogen sulfide biosynthesis; sulfite from sulfate: step 1/3. Functionally, with CysD forms the ATP sulfurylase (ATPS) that catalyzes the adenylation of sulfate producing adenosine 5'-phosphosulfate (APS) and diphosphate, the first enzymatic step in sulfur assimilation pathway. APS synthesis involves the formation of a high-energy phosphoric-sulfuric acid anhydride bond driven by GTP hydrolysis by CysN coupled to ATP hydrolysis by CysD. This is Sulfate adenylyltransferase subunit 1 from Salmonella agona (strain SL483).